The chain runs to 112 residues: CLAVATA3/ESR (CLE)-related protein 44 (112 aa).

Residues 1–39 (MATTIDQTSIKSLHFHQVIRLIITIIFLAFLFLIGPTSS) form the signal peptide. Residues 41–112 (NHHLHESSSK…VPSGPNPISN (72 aa)) form a disordered region. Residues 62-71 (QPSTPSSSTM) show a composition bias toward polar residues. A hydroxyproline mark is found at Pro104 and Pro107. Pro107 is a glycosylation site (O-linked (Ara...) hydroxyproline).

This sequence belongs to the CLV3/ESR signal peptide family. Interacts specifically with the leucine-rich repeat receptor-like protein kinase TDR, especially in the presence of SERK2. The O-glycosylation (arabinosylation) of the hydroxyproline Pro-107 enhances binding affinity of the CLE44p peptide for its receptor. In terms of tissue distribution, mostly expressed in flowers and leaves. Widely expressed along the vascular strands. In roots and hypocotyls, present in endodermal cells as well as cells in the phloem and the adjacent pericycle.

The protein localises to the secreted. Its subcellular location is the extracellular space. Its function is as follows. Extracellular signal peptide that regulates cell fate. May act with TDR as a ligand-receptor pair in a signal transduction pathway that represses tracheary element differentiation but promotes the formation of procambial cells adjacent to phloem cells in the veins. Regulates the transition of protophloem cells from proliferation to differentiation, thus impinging on postembryonic growth capacity of the root meristem; this signaling pathway requires CRN and CLV2. This chain is CLAVATA3/ESR (CLE)-related protein 44, found in Arabidopsis thaliana (Mouse-ear cress).